A 108-amino-acid chain; its full sequence is ER membrane protein complex subunit 6 (108 aa).

3 helical membrane passes run 21–41, 45–65, and 86–106; these read VVSF…GILG, YEGL…LFAL, and ILDG…LVYV.

It belongs to the EMC6 family.

The protein resides in the endoplasmic reticulum membrane. The chain is ER membrane protein complex subunit 6 from Schizosaccharomyces pombe (strain 972 / ATCC 24843) (Fission yeast).